A 98-amino-acid polypeptide reads, in one-letter code: NADH-ubiquinone oxidoreductase chain 4L (98 aa).

The next 3 helical transmembrane spans lie at Met-1–Ile-21, Leu-30–Ile-50, and Ile-61–Ile-81.

Belongs to the complex I subunit 4L family. In terms of assembly, core subunit of respiratory chain NADH dehydrogenase (Complex I) which is composed of 45 different subunits.

The protein localises to the mitochondrion inner membrane. It carries out the reaction a ubiquinone + NADH + 5 H(+)(in) = a ubiquinol + NAD(+) + 4 H(+)(out). Functionally, core subunit of the mitochondrial membrane respiratory chain NADH dehydrogenase (Complex I) which catalyzes electron transfer from NADH through the respiratory chain, using ubiquinone as an electron acceptor. Part of the enzyme membrane arm which is embedded in the lipid bilayer and involved in proton translocation. This chain is NADH-ubiquinone oxidoreductase chain 4L (MT-ND4L), found in Neovison vison (American mink).